A 513-amino-acid polypeptide reads, in one-letter code: Protein disulfide-isomerase (513 aa).

Positions 1 to 23 (MAIRSKAWISLLLALAVALSARA) are cleaved as a signal peptide. The Thioredoxin 1 domain occupies 24 to 145 (EEEPAAAAEG…IVDYLKKQVG (122 aa)). Active-site nucleophile residues include Cys63 and Cys66. Cys63 and Cys66 form a disulfide bridge. A glycan (N-linked (GlcNAc...) asparagine) is linked at Asn279. One can recognise a Thioredoxin 2 domain in the interval 366 to 485 (FRNSEPIPEV…IVDFIKKSKE (120 aa)). Active-site nucleophile residues include Cys408 and Cys411. An intrachain disulfide couples Cys408 to Cys411. The disordered stretch occupies residues 485 to 513 (ETAAPHHHHHPGATGIREGSRAEPVKDEL). Residues 502 to 513 (EGSRAEPVKDEL) are compositionally biased toward basic and acidic residues. The Prevents secretion from ER signature appears at 510–513 (KDEL).

This sequence belongs to the protein disulfide isomerase family.

It localises to the endoplasmic reticulum lumen. The catalysed reaction is Catalyzes the rearrangement of -S-S- bonds in proteins.. Participates in the folding of proteins containing disulfide bonds, may be involved in glycosylation, prolyl hydroxylation and triglyceride transfer. This is Protein disulfide-isomerase (PDI) from Zea mays (Maize).